We begin with the raw amino-acid sequence, 263 residues long: Aquaporin Lacbi1:233199 (263 aa).

At 1–17 (MFTLAHHRHAIRKPMAE) the chain is on the cytoplasmic side. The chain crosses the membrane as a helical span at residues 18–38 (FFGVALLVIFGAGAACQVVLS). The Extracellular portion of the chain corresponds to 39-44 (TNPNSF). The chain crosses the membrane as a helical span at residues 45–65 (LSINFGWAIGIAMGAWISGSI). The Cytoplasmic portion of the chain corresponds to 66–88 (SGGHINPAITIAMATYRGFPWRE). The short motif at 71 to 73 (NPA) is the NPA 1 element. A helical membrane pass occupies residues 89 to 109 (VPSYILAQVLGGVVGAALVYA). The Extracellular portion of the chain corresponds to 110–143 (NYIHAIDVFEGGRHIRTQATASLFATYALPYMTQ). Residues 144–164 (VSCFFSEFLATAVLAMMVLAL) form a helical membrane-spanning segment. Residues 165–174 (TDNRNGAPTN) lie on the Cytoplasmic side of the membrane. A helical membrane pass occupies residues 175-195 (GLSPFALFVLFIGLGASLGME). Over 196–227 (TAYALNPARDFGPRLFLAMAGYGKALFNYRSQ) the chain is Extracellular. The NPA 2 motif lies at 201-203 (NPA). Residues 228–248 (YWLWAPIIAPVLGAQAGGLLY) traverse the membrane as a helical segment. Residues 249–263 (DTFLYDGDDSPIKWR) lie on the Cytoplasmic side of the membrane.

This sequence belongs to the MIP/aquaporin (TC 1.A.8) family.

The protein resides in the membrane. The catalysed reaction is H2O(in) = H2O(out). In terms of biological role, probable water channel required to facilitate the transport of water across membranes. The polypeptide is Aquaporin Lacbi1:233199 (Laccaria bicolor (strain S238N-H82 / ATCC MYA-4686) (Bicoloured deceiver)).